The primary structure comprises 180 residues: Nucleoside triphosphate/diphosphate phosphatase (180 aa).

Residue arginine 26 is the Proton donor of the active site. 6 residues coordinate Mg(2+): asparagine 90, aspartate 106, aspartate 108, aspartate 110, aspartate 123, and glutamate 126.

It belongs to the Ntdp family. Requires Mg(2+) as cofactor.

It catalyses the reaction a ribonucleoside 5'-triphosphate + H2O = a ribonucleoside 5'-diphosphate + phosphate + H(+). The enzyme catalyses a ribonucleoside 5'-diphosphate + H2O = a ribonucleoside 5'-phosphate + phosphate + H(+). Its function is as follows. Has nucleoside phosphatase activity towards nucleoside triphosphates and nucleoside diphosphates. The chain is Nucleoside triphosphate/diphosphate phosphatase from Staphylococcus epidermidis (strain ATCC 35984 / DSM 28319 / BCRC 17069 / CCUG 31568 / BM 3577 / RP62A).